The primary structure comprises 391 residues: Isocitrate dehydrogenase [NADP] (391 aa).

5 residues coordinate D-threo-isocitrate: Ser-102, Asn-104, Arg-108, Arg-118, and Arg-142. Mg(2+) is bound at residue Asp-283.

It belongs to the isocitrate and isopropylmalate dehydrogenases family. In terms of assembly, homodimer. Requires Mg(2+) as cofactor. Mn(2+) serves as cofactor.

It carries out the reaction D-threo-isocitrate + NADP(+) = 2-oxoglutarate + CO2 + NADPH. Catalyzes the oxidative decarboxylation of isocitrate to 2-oxoglutarate and carbon dioxide with the concomitant reduction of NADP(+). This Streptococcus salivarius protein is Isocitrate dehydrogenase [NADP] (icd).